A 113-amino-acid polypeptide reads, in one-letter code: Hydrogenase maturation factor HypA (113 aa).

Residue His-2 coordinates Ni(2+). Residues Cys-73, Cys-76, Cys-89, and Cys-92 each coordinate Zn(2+).

Belongs to the HypA/HybF family.

Involved in the maturation of [NiFe] hydrogenases. Required for nickel insertion into the metal center of the hydrogenase. The protein is Hydrogenase maturation factor HypA of Cereibacter sphaeroides (Rhodobacter sphaeroides).